Here is a 62-residue protein sequence, read N- to C-terminus: Large ribosomal subunit protein bL28 (62 aa).

The protein belongs to the bacterial ribosomal protein bL28 family.

The sequence is that of Large ribosomal subunit protein bL28 from Acetivibrio thermocellus (strain ATCC 27405 / DSM 1237 / JCM 9322 / NBRC 103400 / NCIMB 10682 / NRRL B-4536 / VPI 7372) (Clostridium thermocellum).